Consider the following 572-residue polypeptide: Mitochondrial distribution and morphology protein 34 (572 aa).

Residues 1–195 (MAFNFNWSPL…LPAIIHRLSL (195 aa)) form the SMP-LTD domain. Disordered regions lie at residues 208–236 (LQTQ…VDAL), 296–405 (PSDQ…CSAP), 455–518 (RDTA…PFIN), and 551–572 (NACG…AYGH). Residues 296 to 347 (PSDQTDASGGVTSPFSPVLSRTQSQVGSMSSFPDSASMVSNQSRSSTPSHTF) show a composition bias toward polar residues. The span at 358–370 (RHSKAHARKRKKR) shows a compositional bias: basic residues. Positions 371-381 (VVDLRRPKTTD) are enriched in basic and acidic residues. Polar residues-rich tracts occupy residues 387–401 (SDES…TPSI) and 498–511 (ATGS…QLPS).

It belongs to the MDM34 family. As to quaternary structure, component of the ER-mitochondria encounter structure (ERMES) or MDM complex, composed of mmm1, mdm10, mdm12 and mdm34.

It is found in the mitochondrion outer membrane. Component of the ERMES/MDM complex, which serves as a molecular tether to connect the endoplasmic reticulum (ER) and mitochondria. Components of this complex are involved in the control of mitochondrial shape and protein biogenesis, and function in nonvesicular lipid trafficking between the ER and mitochondria. Mdm34 is required for the interaction of the ER-resident membrane protein mmm1 and the outer mitochondrial membrane-resident beta-barrel protein mdm10. In Neosartorya fischeri (strain ATCC 1020 / DSM 3700 / CBS 544.65 / FGSC A1164 / JCM 1740 / NRRL 181 / WB 181) (Aspergillus fischerianus), this protein is Mitochondrial distribution and morphology protein 34.